Consider the following 105-residue polypeptide: Small ribosomal subunit protein uS10 (105 aa).

It belongs to the universal ribosomal protein uS10 family. In terms of assembly, part of the 30S ribosomal subunit.

Its function is as follows. Involved in the binding of tRNA to the ribosomes. The polypeptide is Small ribosomal subunit protein uS10 (Rickettsia akari (strain Hartford)).